Reading from the N-terminus, the 85-residue chain is UPF0181 protein YPTS_1774 (85 aa).

The segment covering Asp-57–Asp-72 has biased composition (basic and acidic residues). The interval Asp-57 to Gly-85 is disordered. Over residues Glu-73–Gly-85 the composition is skewed to acidic residues.

Belongs to the UPF0181 family.

The polypeptide is UPF0181 protein YPTS_1774 (Yersinia pseudotuberculosis serotype IB (strain PB1/+)).